A 299-amino-acid polypeptide reads, in one-letter code: Aspartate carbamoyltransferase catalytic subunit (299 aa).

2 residues coordinate carbamoyl phosphate: Arg51 and Thr52. Lys80 contacts L-aspartate. 3 residues coordinate carbamoyl phosphate: Arg101, His129, and Gln132. Residues Arg162 and Arg221 each coordinate L-aspartate. Carbamoyl phosphate-binding residues include Leu260 and Pro261.

The protein belongs to the aspartate/ornithine carbamoyltransferase superfamily. ATCase family. Heterooligomer of catalytic and regulatory chains.

The catalysed reaction is carbamoyl phosphate + L-aspartate = N-carbamoyl-L-aspartate + phosphate + H(+). It participates in pyrimidine metabolism; UMP biosynthesis via de novo pathway; (S)-dihydroorotate from bicarbonate: step 2/3. Its function is as follows. Catalyzes the condensation of carbamoyl phosphate and aspartate to form carbamoyl aspartate and inorganic phosphate, the committed step in the de novo pyrimidine nucleotide biosynthesis pathway. The sequence is that of Aspartate carbamoyltransferase catalytic subunit from Sulfolobus acidocaldarius (strain ATCC 33909 / DSM 639 / JCM 8929 / NBRC 15157 / NCIMB 11770).